Consider the following 460-residue polypeptide: Ammonium transporter Rh type C (460 aa).

The Cytoplasmic segment spans residues 1–9; that stretch reads MVWNTNLRW. Residues 10–30 form a helical membrane-spanning segment; that stretch reads RLPVTCLLLQVALVVLFGVFV. Residues 31 to 61 lie on the Extracellular side of the membrane; sequence RYDMDADPHWIDKKEAENSTSDMENEFYYRY. Asn-48 carries N-linked (GlcNAc...) asparagine glycosylation. Residues 62 to 82 traverse the membrane as a helical segment; that stretch reads PSFQDVHVMIFVGFGFLMTFL. At 83 to 90 the chain is on the cytoplasmic side; the sequence is QRYGYSSV. The helical transmembrane segment at 91–111 threads the bilayer; that stretch reads GFNFLLAAFGIQWALLLQGWF. Residues 112–125 lie on the Extracellular side of the membrane; the sequence is HSYYRGYIRVGVEN. The chain crosses the membrane as a helical span at residues 126–145; sequence LINADFCVGSVCVAFGAVLG. Over 146 to 151 the chain is Cytoplasmic; the sequence is KVSPVQ. The chain crosses the membrane as a helical span at residues 152–174; sequence LLIMTLFQVTLFSVNEFILLNLL. Residues 175–179 are Extracellular-facing; the sequence is EVKDA. A helical transmembrane segment spans residues 180-200; it reads GGSMTIHTFGAYFGLTVTWIL. At 201 to 219 the chain is on the cytoplasmic side; it reads YRPGLHQSKERQSSVYHSD. The chain crosses the membrane as a helical span at residues 220 to 240; that stretch reads LFAMIGTLFLWMYWPSFNSAV. Over 241 to 251 the chain is Extracellular; it reads SNHGDAQHRAA. Residues 252 to 272 form a helical membrane-spanning segment; it reads INTYCSLAACVLTSVALSSAL. At 273-285 the chain is on the cytoplasmic side; it reads HKKGKLDMVHIQN. Residues 286–306 form a helical membrane-spanning segment; it reads ATLAGGVAVGTAAEMMLMPYG. A topological domain (extracellular) is located at residue Ser-307. A helical membrane pass occupies residues 308–328; the sequence is LIVGFICGIVSTLGFVYLTPF. The Cytoplasmic segment spans residues 329 to 339; it reads LESRLRVQDTC. A helical transmembrane segment spans residues 340–360; it reads GIHNLHGIPGIIGAIVGAVTA. At 361–396 the chain is on the extracellular side; it reads SCANTDVYGVNGLTQAFGFDGFKTNRTPSMQGKFQA. Residues 397–417 traverse the membrane as a helical segment; the sequence is AGLFVSLAMALVGGIIVGIIL. At 418-460 the chain is on the cytoplasmic side; sequence KLPFWGQPADENCFEDAIYWEMPEEPKSTVLHPEDSTLKPSEP.

It belongs to the ammonium transporter (TC 2.A.49) family. Rh subfamily. In terms of assembly, homotrimer. N-glycosylated.

It localises to the apical cell membrane. It carries out the reaction NH4(+)(in) = NH4(+)(out). It catalyses the reaction methylamine(out) = methylamine(in). The enzyme catalyses CO2(out) = CO2(in). Functionally, ammonium transporter involved in the maintenance of acid-base homeostasis. Transports ammonium and its related derivative methylammonium across the plasma membrane of epithelial cells likely contributing to renal transepithelial ammonia transport and ammonia metabolism. Postulated to primarily mediate an electroneutral bidirectional transport of NH3 ammonia species according to a mechanism that implies interaction of an NH4(+) ion with acidic residues of the pore entry followed by dissociation of NH4(+) into NH3 and H(+). As a result NH3 transits through the central pore and is protonated on the extracellular side reforming NH4(+). May act as a CO2 channel providing for renal acid secretion. The protein is Ammonium transporter Rh type C (RHCG) of Canis lupus familiaris (Dog).